The chain runs to 263 residues: Ribosomal RNA small subunit methyltransferase A (263 aa).

Residues asparagine 20, leucine 22, glycine 47, glutamate 68, aspartate 90, and asparagine 111 each contribute to the S-adenosyl-L-methionine site.

It belongs to the class I-like SAM-binding methyltransferase superfamily. rRNA adenine N(6)-methyltransferase family. RsmA subfamily.

It localises to the cytoplasm. The catalysed reaction is adenosine(1518)/adenosine(1519) in 16S rRNA + 4 S-adenosyl-L-methionine = N(6)-dimethyladenosine(1518)/N(6)-dimethyladenosine(1519) in 16S rRNA + 4 S-adenosyl-L-homocysteine + 4 H(+). Its function is as follows. Specifically dimethylates two adjacent adenosines (A1518 and A1519) in the loop of a conserved hairpin near the 3'-end of 16S rRNA in the 30S particle. May play a critical role in biogenesis of 30S subunits. The chain is Ribosomal RNA small subunit methyltransferase A from Chlorobium chlorochromatii (strain CaD3).